Reading from the N-terminus, the 326-residue chain is Biotin synthase (326 aa).

The region spanning 48–277 is the Radical SAM core domain; sequence FGAGKVDLCS…SARIRMAGGR (230 aa). The [4Fe-4S] cluster site is built by Cys66, Cys70, and Cys73. 4 residues coordinate [2Fe-2S] cluster: Ser110, Cys142, Cys202, and Arg272.

The protein belongs to the radical SAM superfamily. Biotin synthase family. Homodimer. It depends on [4Fe-4S] cluster as a cofactor. [2Fe-2S] cluster is required as a cofactor.

It carries out the reaction (4R,5S)-dethiobiotin + (sulfur carrier)-SH + 2 reduced [2Fe-2S]-[ferredoxin] + 2 S-adenosyl-L-methionine = (sulfur carrier)-H + biotin + 2 5'-deoxyadenosine + 2 L-methionine + 2 oxidized [2Fe-2S]-[ferredoxin]. Its pathway is cofactor biosynthesis; biotin biosynthesis; biotin from 7,8-diaminononanoate: step 2/2. Its function is as follows. Catalyzes the conversion of dethiobiotin (DTB) to biotin by the insertion of a sulfur atom into dethiobiotin via a radical-based mechanism. In Heliobacterium modesticaldum (strain ATCC 51547 / Ice1), this protein is Biotin synthase.